Reading from the N-terminus, the 218-residue chain is Elongation factor Ts (218 aa).

Residues 82-85 form an involved in Mg(2+) ion dislocation from EF-Tu region; that stretch reads TDFV.

The protein belongs to the EF-Ts family.

It localises to the cytoplasm. Associates with the EF-Tu.GDP complex and induces the exchange of GDP to GTP. It remains bound to the aminoacyl-tRNA.EF-Tu.GTP complex up to the GTP hydrolysis stage on the ribosome. This chain is Elongation factor Ts, found in Prochlorococcus marinus (strain NATL2A).